The primary structure comprises 157 residues: Endoribonuclease YbeY (157 aa).

Zn(2+) is bound by residues H123, H127, and H133.

It belongs to the endoribonuclease YbeY family. Requires Zn(2+) as cofactor.

It is found in the cytoplasm. Functionally, single strand-specific metallo-endoribonuclease involved in late-stage 70S ribosome quality control and in maturation of the 3' terminus of the 16S rRNA. This is Endoribonuclease YbeY from Desulfitobacterium hafniense (strain Y51).